Reading from the N-terminus, the 377-residue chain is Chaperone protein DnaJ (377 aa).

Residues 5 to 70 (DYYEVLGVSR…DKKAAYDQFG (66 aa)) form the J domain. The CR-type zinc-finger motif lies at 133–211 (GLTKELRIPT…CHGDGRVEKS (79 aa)). Residues Cys146, Cys149, Cys163, Cys166, Cys185, Cys188, Cys199, and Cys202 each contribute to the Zn(2+) site. CXXCXGXG motif repeat units lie at residues 146–153 (CDLCEGSG), 163–170 (CGTCHGQG), 185–192 (CPTCHGRG), and 199–206 (CSKCHGDG).

The protein belongs to the DnaJ family. Homodimer. Zn(2+) is required as a cofactor.

Its subcellular location is the cytoplasm. Functionally, participates actively in the response to hyperosmotic and heat shock by preventing the aggregation of stress-denatured proteins and by disaggregating proteins, also in an autonomous, DnaK-independent fashion. Unfolded proteins bind initially to DnaJ; upon interaction with the DnaJ-bound protein, DnaK hydrolyzes its bound ATP, resulting in the formation of a stable complex. GrpE releases ADP from DnaK; ATP binding to DnaK triggers the release of the substrate protein, thus completing the reaction cycle. Several rounds of ATP-dependent interactions between DnaJ, DnaK and GrpE are required for fully efficient folding. Also involved, together with DnaK and GrpE, in the DNA replication of plasmids through activation of initiation proteins. This chain is Chaperone protein DnaJ, found in Shewanella baltica (strain OS195).